The sequence spans 355 residues: Tetraacyldisaccharide 4'-kinase (355 aa).

Position 49–56 (49–56 (TAGGTGKT)) interacts with ATP.

Belongs to the LpxK family.

It catalyses the reaction a lipid A disaccharide + ATP = a lipid IVA + ADP + H(+). The protein operates within glycolipid biosynthesis; lipid IV(A) biosynthesis; lipid IV(A) from (3R)-3-hydroxytetradecanoyl-[acyl-carrier-protein] and UDP-N-acetyl-alpha-D-glucosamine: step 6/6. In terms of biological role, transfers the gamma-phosphate of ATP to the 4'-position of a tetraacyldisaccharide 1-phosphate intermediate (termed DS-1-P) to form tetraacyldisaccharide 1,4'-bis-phosphate (lipid IVA). This Chlorobium luteolum (strain DSM 273 / BCRC 81028 / 2530) (Pelodictyon luteolum) protein is Tetraacyldisaccharide 4'-kinase.